Here is a 239-residue protein sequence, read N- to C-terminus: MLTRKQQELLLFIHGTNEGNPGVPPSFDEMKDALDLASKSGIHRLITALEERGFIRRLPNRARALEVIKLPEAYAGASQVRRGFSPTVIEGSLGKLASPPPAPKPAPPAEAASVAVPVMGRIAAGVPISAIQNNMHDISVPVEMIGSGEHYALEIKGDSMIEAGILDGDTVIIRNGSTASPGDIVVALIDDEEATLKRFRRKGASIALEAANPAYETRIFGPDRVKIQGRLVGLIRRYH.

The segment at residues 27 to 47 (FDEMKDALDLASKSGIHRLIT) is a DNA-binding region (H-T-H motif). Catalysis depends on for autocatalytic cleavage activity residues Ser-159 and Lys-197.

The protein belongs to the peptidase S24 family. As to quaternary structure, homodimer.

The enzyme catalyses Hydrolysis of Ala-|-Gly bond in repressor LexA.. Represses a number of genes involved in the response to DNA damage (SOS response), including recA and lexA. In the presence of single-stranded DNA, RecA interacts with LexA causing an autocatalytic cleavage which disrupts the DNA-binding part of LexA, leading to derepression of the SOS regulon and eventually DNA repair. This chain is LexA repressor, found in Rhizobium radiobacter (Agrobacterium tumefaciens).